A 734-amino-acid chain; its full sequence is Photosystem I P700 chlorophyll a apoprotein A2 (734 aa).

Helical transmembrane passes span 46–69 (IFAS…FHVA), 135–158 (LYTG…LHLQ), 175–199 (LNHH…HVAI), 273–291 (IAHH…GHMY), 330–353 (IHFQ…QHMY), 369–395 (AALY…IFFI), 417–439 (AIIS…LYVH), and 517–535 (FLVH…LILV). Cys-559 and Cys-568 together coordinate [4Fe-4S] cluster. 2 consecutive transmembrane segments (helical) span residues 575–596 (AFYL…YWHW) and 643–665 (LSVW…MFLI). Residues His-654, Met-662, and Tyr-670 each coordinate chlorophyll a. Residue Trp-671 participates in phylloquinone binding. Residues 707-727 (LVGLAHFSVGYIFTYAAFLIA) traverse the membrane as a helical segment.

It belongs to the PsaA/PsaB family. The PsaA/B heterodimer binds the P700 chlorophyll special pair and subsequent electron acceptors. PSI consists of a core antenna complex that captures photons, and an electron transfer chain that converts photonic excitation into a charge separation. The eukaryotic PSI reaction center is composed of at least 11 subunits. It depends on P700 is a chlorophyll a/chlorophyll a' dimer, A0 is one or more chlorophyll a, A1 is one or both phylloquinones and FX is a shared 4Fe-4S iron-sulfur center. as a cofactor.

It localises to the plastid. The protein localises to the chloroplast thylakoid membrane. It catalyses the reaction reduced [plastocyanin] + hnu + oxidized [2Fe-2S]-[ferredoxin] = oxidized [plastocyanin] + reduced [2Fe-2S]-[ferredoxin]. Functionally, psaA and PsaB bind P700, the primary electron donor of photosystem I (PSI), as well as the electron acceptors A0, A1 and FX. PSI is a plastocyanin-ferredoxin oxidoreductase, converting photonic excitation into a charge separation, which transfers an electron from the donor P700 chlorophyll pair to the spectroscopically characterized acceptors A0, A1, FX, FA and FB in turn. Oxidized P700 is reduced on the lumenal side of the thylakoid membrane by plastocyanin. The polypeptide is Photosystem I P700 chlorophyll a apoprotein A2 (Dioscorea elephantipes (Elephant's foot yam)).